Consider the following 418-residue polypeptide: UDP-N-acetylglucosamine 1-carboxyvinyltransferase (418 aa).

22–23 (KN) contacts phosphoenolpyruvate. R93 provides a ligand contact to UDP-N-acetyl-alpha-D-glucosamine. The active-site Proton donor is the C117. Position 117 is a 2-(S-cysteinyl)pyruvic acid O-phosphothioketal (C117). Residues 122 to 126 (RPIDL), D306, and L328 contribute to the UDP-N-acetyl-alpha-D-glucosamine site.

It belongs to the EPSP synthase family. MurA subfamily.

The protein resides in the cytoplasm. The catalysed reaction is phosphoenolpyruvate + UDP-N-acetyl-alpha-D-glucosamine = UDP-N-acetyl-3-O-(1-carboxyvinyl)-alpha-D-glucosamine + phosphate. It functions in the pathway cell wall biogenesis; peptidoglycan biosynthesis. Its function is as follows. Cell wall formation. Adds enolpyruvyl to UDP-N-acetylglucosamine. The chain is UDP-N-acetylglucosamine 1-carboxyvinyltransferase from Campylobacter hominis (strain ATCC BAA-381 / DSM 21671 / CCUG 45161 / LMG 19568 / NCTC 13146 / CH001A).